The following is a 150-amino-acid chain: NADH-quinone oxidoreductase subunit A (150 aa).

3 helical membrane passes run Trp-14–Ala-34, Leu-70–Val-90, and Leu-98–Val-118.

This sequence belongs to the complex I subunit 3 family. As to quaternary structure, NDH-1 is composed of 13 different subunits. Subunits NuoA, H, J, K, L, M, N constitute the membrane sector of the complex.

Its subcellular location is the cell inner membrane. The catalysed reaction is a quinone + NADH + 5 H(+)(in) = a quinol + NAD(+) + 4 H(+)(out). Functionally, NDH-1 shuttles electrons from NADH, via FMN and iron-sulfur (Fe-S) centers, to quinones in the respiratory chain. The immediate electron acceptor for the enzyme in this species is believed to be ubiquinone. Couples the redox reaction to proton translocation (for every two electrons transferred, four hydrogen ions are translocated across the cytoplasmic membrane), and thus conserves the redox energy in a proton gradient. The polypeptide is NADH-quinone oxidoreductase subunit A (Proteus mirabilis (strain HI4320)).